Reading from the N-terminus, the 316-residue chain is Ribonuclease Z (316 aa).

Zn(2+) contacts are provided by histidine 59, histidine 61, aspartate 63, histidine 64, histidine 135, aspartate 203, and histidine 261. The Proton acceptor role is filled by aspartate 63.

The protein belongs to the RNase Z family. In terms of assembly, homodimer. It depends on Zn(2+) as a cofactor.

It carries out the reaction Endonucleolytic cleavage of RNA, removing extra 3' nucleotides from tRNA precursor, generating 3' termini of tRNAs. A 3'-hydroxy group is left at the tRNA terminus and a 5'-phosphoryl group is left at the trailer molecule.. Functionally, zinc phosphodiesterase, which displays some tRNA 3'-processing endonuclease activity. Probably involved in tRNA maturation, by removing a 3'-trailer from precursor tRNA. This chain is Ribonuclease Z, found in Nanoarchaeum equitans (strain Kin4-M).